A 200-amino-acid chain; its full sequence is Glycerol-3-phosphate acyltransferase (200 aa).

The next 5 membrane-spanning stretches (helical) occupy residues 2 to 22 (FNIPAVAVSYLIGSLSFAVIV), 51 to 71 (KAAALTLLGDAAKGLVAVLLA), 84 to 104 (AIAAVALAALVGHMWPVFFGF), 114 to 134 (LGVLLALSPTTALVCALIWLV), and 158 to 178 (LFFMPHTSWIFATLAIAILVL).

The protein belongs to the PlsY family. In terms of assembly, probably interacts with PlsX.

Its subcellular location is the cell inner membrane. The enzyme catalyses an acyl phosphate + sn-glycerol 3-phosphate = a 1-acyl-sn-glycero-3-phosphate + phosphate. It participates in lipid metabolism; phospholipid metabolism. Catalyzes the transfer of an acyl group from acyl-phosphate (acyl-PO(4)) to glycerol-3-phosphate (G3P) to form lysophosphatidic acid (LPA). This enzyme utilizes acyl-phosphate as fatty acyl donor, but not acyl-CoA or acyl-ACP. This is Glycerol-3-phosphate acyltransferase from Neisseria meningitidis serogroup A / serotype 4A (strain DSM 15465 / Z2491).